The chain runs to 160 residues: Cyclic pyranopterin monophosphate synthase (160 aa).

Residues 76-78 (MCH) and 113-114 (ME) each bind substrate. The active site involves Asp-128.

This sequence belongs to the MoaC family. As to quaternary structure, homohexamer; trimer of dimers.

The enzyme catalyses (8S)-3',8-cyclo-7,8-dihydroguanosine 5'-triphosphate = cyclic pyranopterin phosphate + diphosphate. Its pathway is cofactor biosynthesis; molybdopterin biosynthesis. Its function is as follows. Catalyzes the conversion of (8S)-3',8-cyclo-7,8-dihydroguanosine 5'-triphosphate to cyclic pyranopterin monophosphate (cPMP). This Brevibacillus brevis (strain 47 / JCM 6285 / NBRC 100599) protein is Cyclic pyranopterin monophosphate synthase.